The sequence spans 137 residues: Large ribosomal subunit protein uL16 (137 aa).

The segment covering 1–17 (MLSPKRTKFRKQQRGRM) has biased composition (basic residues). The tract at residues 1–24 (MLSPKRTKFRKQQRGRMRGNANSG) is disordered.

Belongs to the universal ribosomal protein uL16 family. In terms of assembly, part of the 50S ribosomal subunit.

Functionally, binds 23S rRNA and is also seen to make contacts with the A and possibly P site tRNAs. The chain is Large ribosomal subunit protein uL16 from Trichodesmium erythraeum (strain IMS101).